Reading from the N-terminus, the 644-residue chain is Chaperone protein DnaK (644 aa).

The residue at position 199 (Thr-199) is a Phosphothreonine; by autocatalysis. The tract at residues 605–644 (KKSSEGQAAQGQTQSQESTKPVEEGVVDAEFEEVKEEDKK) is disordered. The span at 609-623 (EGQAAQGQTQSQEST) shows a compositional bias: polar residues. Positions 629-644 (GVVDAEFEEVKEEDKK) are enriched in acidic residues.

The protein belongs to the heat shock protein 70 family.

In terms of biological role, acts as a chaperone. This chain is Chaperone protein DnaK, found in Legionella pneumophila (strain Paris).